We begin with the raw amino-acid sequence, 485 residues long: Glutamyl-tRNA(Gln) amidotransferase subunit A (485 aa).

Active-site charge relay system residues include Lys74 and Ser149. The active-site Acyl-ester intermediate is the Ser173.

It belongs to the amidase family. GatA subfamily. In terms of assembly, heterotrimer of A, B and C subunits.

The catalysed reaction is L-glutamyl-tRNA(Gln) + L-glutamine + ATP + H2O = L-glutaminyl-tRNA(Gln) + L-glutamate + ADP + phosphate + H(+). Allows the formation of correctly charged Gln-tRNA(Gln) through the transamidation of misacylated Glu-tRNA(Gln) in organisms which lack glutaminyl-tRNA synthetase. The reaction takes place in the presence of glutamine and ATP through an activated gamma-phospho-Glu-tRNA(Gln). The chain is Glutamyl-tRNA(Gln) amidotransferase subunit A from Janthinobacterium sp. (strain Marseille) (Minibacterium massiliensis).